A 407-amino-acid polypeptide reads, in one-letter code: Probable tRNA sulfurtransferase (407 aa).

The 105-residue stretch at 61–165 folds into the THUMP domain; it reads EEMCNRLKKV…LDAIYMYDQV (105 aa). ATP contacts are provided by residues 183–184, 208–209, arginine 265, glycine 287, and glutamine 296; these read ML and HF.

This sequence belongs to the ThiI family.

The protein resides in the cytoplasm. The catalysed reaction is [ThiI sulfur-carrier protein]-S-sulfanyl-L-cysteine + a uridine in tRNA + 2 reduced [2Fe-2S]-[ferredoxin] + ATP + H(+) = [ThiI sulfur-carrier protein]-L-cysteine + a 4-thiouridine in tRNA + 2 oxidized [2Fe-2S]-[ferredoxin] + AMP + diphosphate. It carries out the reaction [ThiS sulfur-carrier protein]-C-terminal Gly-Gly-AMP + S-sulfanyl-L-cysteinyl-[cysteine desulfurase] + AH2 = [ThiS sulfur-carrier protein]-C-terminal-Gly-aminoethanethioate + L-cysteinyl-[cysteine desulfurase] + A + AMP + 2 H(+). Its pathway is cofactor biosynthesis; thiamine diphosphate biosynthesis. Functionally, catalyzes the ATP-dependent transfer of a sulfur to tRNA to produce 4-thiouridine in position 8 of tRNAs, which functions as a near-UV photosensor. Also catalyzes the transfer of sulfur to the sulfur carrier protein ThiS, forming ThiS-thiocarboxylate. This is a step in the synthesis of thiazole, in the thiamine biosynthesis pathway. The sulfur is donated as persulfide by IscS. In Staphylococcus saprophyticus subsp. saprophyticus (strain ATCC 15305 / DSM 20229 / NCIMB 8711 / NCTC 7292 / S-41), this protein is Probable tRNA sulfurtransferase.